The chain runs to 362 residues: P2Y purinoceptor 1 (362 aa).

Residues 1–40 lie on the Extracellular side of the membrane; the sequence is MTEALISAALNGTQPELLAGGWAAGNASTKCSLTKTGFQF. Residues Asn-11 and Asn-26 are each glycosylated (N-linked (GlcNAc...) asparagine). Intrachain disulfides connect Cys-31/Cys-285 and Cys-113/Cys-191. Lys-35 contributes to the ADP binding site. A helical membrane pass occupies residues 41-63; the sequence is YYLPTVYILVFITGFLGNSVAIW. At 64–76 the chain is on the cytoplasmic side; the sequence is MFVFHMRPWSGIS. Residues 77-98 traverse the membrane as a helical segment; sequence VYMFNLALADFLYVLTLPALIF. Residues 99–114 are Extracellular-facing; the sequence is YYFNKTDWIFGDVMCK. Asn-102 is a glycosylation site (N-linked (GlcNAc...) asparagine). The helical transmembrane segment at 115 to 136 threads the bilayer; it reads LQRFIFHVNLYGSILFLTCISV. Residues 137-155 lie on the Cytoplasmic side of the membrane; the sequence is HRYTGVVHPLKSLGRLKKK. Residues 156-177 form a helical membrane-spanning segment; it reads NAVYVSSLVWALVVAVIAPILF. Topologically, residues 178–203 are extracellular; the sequence is YSGTGVRRNKTITCYDTTADEYLRSY. N-linked (GlcNAc...) asparagine glycosylation occurs at Asn-186. 192-194 is an ADP binding site; that stretch reads YDT. Residues 204 to 226 form a helical membrane-spanning segment; sequence FVYSMCTTVFMFCIPFIVILGCY. Residues 227 to 249 lie on the Cytoplasmic side of the membrane; it reads GLIVKALIYKDLDNSPLRRKSIY. The chain crosses the membrane as a helical span at residues 250-273; that stretch reads LVIIVLTVFAVSYLPFHVMKTLNL. ADP contacts are provided by residues 272-276, 292-295, and Arg-299; these read NLRAR and YATY. The Extracellular portion of the chain corresponds to 274–292; the sequence is RARLDFQTPQMCAFNDKVY. Residues 293–314 traverse the membrane as a helical segment; that stretch reads ATYQVTRGLASLNSCVDPILYF. Over 315–362 the chain is Cytoplasmic; the sequence is LAGDTFRRRLSRATRKSSRRSEPNVQSKSEEMTLNILTEYKQNGDTSL.

It belongs to the G-protein coupled receptor 1 family. In terms of tissue distribution, mainly found in blood, brain, and lung. To a lesser extent in stomach, gut and skeletal muscle.

It is found in the cell membrane. Functionally, receptor for extracellular adenine nucleotides such as ADP. In platelets, binding to ADP leads to mobilization of intracellular calcium ions via activation of phospholipase C, a change in platelet shape, and ultimately platelet aggregation. The sequence is that of P2Y purinoceptor 1 (P2RY1) from Meleagris gallopavo (Wild turkey).